The chain runs to 1134 residues: Tetrathionate reductase subunit A (1134 aa).

The segment at residues 1 to 31 (MQLSRRDFIKGLVAVGSASVFLAGYSETVDR) is a signal peptide (tat-type signal). The region spanning 46–133 (GRIVHSACLG…DGIHYLYDPY (88 aa)) is the 4Fe-4S Mo/W bis-MGD-type domain. 4 residues coordinate [4Fe-4S] cluster: cysteine 53, cysteine 56, cysteine 60, and cysteine 119.

This sequence belongs to the prokaryotic molybdopterin-containing oxidoreductase family. As to quaternary structure, probably composed of three subunits: TtrA, TtrB and TtrC. Precursor interacts with TtrD. [4Fe-4S] cluster serves as cofactor. Requires Mo-bis(molybdopterin guanine dinucleotide) as cofactor. Exported by the Tat system. The position of the signal peptide cleavage has not been experimentally proven.

It localises to the cell membrane. In terms of biological role, part of a membrane-bound tetrathionate reductase that catalyzes the reduction of tetrathionate to thiosulfate. TtrA is the catalytic subunit. In Archaeoglobus fulgidus (strain ATCC 49558 / DSM 4304 / JCM 9628 / NBRC 100126 / VC-16), this protein is Tetrathionate reductase subunit A (ttrA).